Consider the following 133-residue polypeptide: L-cystatin (133 aa).

A signal peptide spans Met-1–Gly-19. Gln-20 is modified (pyrrolidone carboxylic acid). The short motif at Gln-67–Gly-71 is the Secondary area of contact element. Intrachain disulfides connect Cys-85–Cys-98 and Cys-109–Cys-129.

The protein belongs to the cystatin family. As to expression, expressed in hemocytes and slightly in heart.

It is found in the cytoplasmic granule. Its function is as follows. Tight-binding inhibitor for papain. It has an important role in the protection of cells, antimicrobial activity against Gram-negative bacteria, defense against invading microbes, and response to external stimuli. The sequence is that of L-cystatin from Tachypleus tridentatus (Japanese horseshoe crab).